A 98-amino-acid polypeptide reads, in one-letter code: Signal peptidase complex subunit 1 (98 aa).

The Cytoplasmic portion of the chain corresponds to 1-18 (MLDIQTHMDFAGQGKAER). The helical transmembrane segment at 19 to 38 (WSRFIITFFGIVGLVYGAFV) threads the bilayer. Topologically, residues 39–42 (QQFS) are lumenal. Residues 43–65 (QTVYILGAGFVLSSLITIPPWPL) traverse the membrane as a helical segment. The Cytoplasmic portion of the chain corresponds to 66–98 (YRRNALKWQKPIDTDAKSSSSESGDEGKKKKKQ). Positions 78-98 (DTDAKSSSSESGDEGKKKKKQ) are disordered. S84, S85, S86, and S88 each carry phosphoserine.

Belongs to the SPCS1 family. In terms of assembly, component of the signal peptidase complex (SPC) composed of a catalytic subunit twr/SEC11 and three accessory subunits Spase12/SPCS1, Spase25/SPCS2 and Spase22-23/SPCS3. The complex induces a local thinning of the ER membrane which is used to measure the length of the signal peptide (SP) h-region of protein substrates. This ensures the selectivity of the complex towards h-regions shorter than 18-20 amino acids.

The protein resides in the endoplasmic reticulum membrane. In terms of biological role, component of the signal peptidase complex (SPC) which catalyzes the cleavage of N-terminal signal sequences from nascent proteins as they are translocated into the lumen of the endoplasmic reticulum. Dispensable for SPC enzymatic activity. (Microbial infection) Plays an important role in infection by flaviviruses such as West Nile virus and Dengue virus type 2. This Drosophila melanogaster (Fruit fly) protein is Signal peptidase complex subunit 1 (Spase12).